A 452-amino-acid chain; its full sequence is Tubulin alpha-1 chain (452 aa).

Gln11 lines the GTP pocket. Position 40 is an N6-acetyllysine (Lys40). Positions 71, 144, 145, 179, 206, and 228 each coordinate GTP. A Mg(2+)-binding site is contributed by Glu71. Glu254 is an active-site residue. A disordered region spans residues 430–452 (KDYEEVGAESGDGDDDGLGEEEY). The segment covering 431–452 (DYEEVGAESGDGDDDGLGEEEY) has biased composition (acidic residues).

The protein belongs to the tubulin family. In terms of assembly, dimer of alpha and beta chains. A typical microtubule is a hollow water-filled tube with an outer diameter of 25 nm and an inner diameter of 15 nM. Alpha-beta heterodimers associate head-to-tail to form protofilaments running lengthwise along the microtubule wall with the beta-tubulin subunit facing the microtubule plus end conferring a structural polarity. Microtubules usually have 13 protofilaments but different protofilament numbers can be found in some organisms and specialized cells. The cofactor is Mg(2+). In terms of processing, undergoes a tyrosination/detyrosination cycle, the cyclic removal and re-addition of a C-terminal tyrosine residue by the enzymes tubulin tyrosine carboxypeptidase (TTCP) and tubulin tyrosine ligase (TTL), respectively. Acetylation of alpha chains at Lys-40 stabilizes microtubules and affects affinity and processivity of microtubule motors. This modification has a role in multiple cellular functions, ranging from cell motility, cell cycle progression or cell differentiation to intracellular trafficking and signaling.

It is found in the cytoplasm. The protein resides in the cytoskeleton. It catalyses the reaction GTP + H2O = GDP + phosphate + H(+). Its function is as follows. Tubulin is the major constituent of microtubules, a cylinder consisting of laterally associated linear protofilaments composed of alpha- and beta-tubulin heterodimers. Microtubules grow by the addition of GTP-tubulin dimers to the microtubule end, where a stabilizing cap forms. Below the cap, tubulin dimers are in GDP-bound state, owing to GTPase activity of alpha-tubulin. This chain is Tubulin alpha-1 chain (TUBA1), found in Pisum sativum (Garden pea).